Here is a 547-residue protein sequence, read N- to C-terminus: CTP synthase (547 aa).

An amidoligase domain region spans residues 1–265 (MARYIFITGG…DQAVLDAFDI (265 aa)). Ser13 is a binding site for CTP. Ser13 contacts UTP. ATP is bound by residues 14–19 (SLGKGL) and Asp71. The Mg(2+) site is built by Asp71 and Glu139. CTP-binding positions include 146–148 (DIE), 186–191 (KTKPTQ), and Lys222. UTP contacts are provided by residues 186 to 191 (KTKPTQ) and Lys222. Positions 291-546 (KVAIVGKYTQ…IRAAKENSRL (256 aa)) constitute a Glutamine amidotransferase type-1 domain. Gly353 provides a ligand contact to L-glutamine. Residue Cys380 is the Nucleophile; for glutamine hydrolysis of the active site. L-glutamine is bound by residues 381–384 (LGMQ), Glu404, and Arg474. Catalysis depends on residues His519 and Glu521.

This sequence belongs to the CTP synthase family. As to quaternary structure, homotetramer.

It catalyses the reaction UTP + L-glutamine + ATP + H2O = CTP + L-glutamate + ADP + phosphate + 2 H(+). The enzyme catalyses L-glutamine + H2O = L-glutamate + NH4(+). It carries out the reaction UTP + NH4(+) + ATP = CTP + ADP + phosphate + 2 H(+). It functions in the pathway pyrimidine metabolism; CTP biosynthesis via de novo pathway; CTP from UDP: step 2/2. With respect to regulation, allosterically activated by GTP, when glutamine is the substrate; GTP has no effect on the reaction when ammonia is the substrate. The allosteric effector GTP functions by stabilizing the protein conformation that binds the tetrahedral intermediate(s) formed during glutamine hydrolysis. Inhibited by the product CTP, via allosteric rather than competitive inhibition. Functionally, catalyzes the ATP-dependent amination of UTP to CTP with either L-glutamine or ammonia as the source of nitrogen. Regulates intracellular CTP levels through interactions with the four ribonucleotide triphosphates. The polypeptide is CTP synthase (Roseobacter denitrificans (strain ATCC 33942 / OCh 114) (Erythrobacter sp. (strain OCh 114))).